The chain runs to 293 residues: Elongation factor Ts (293 aa).

Residues 81–84 form an involved in Mg(2+) ion dislocation from EF-Tu region; it reads TDFV.

This sequence belongs to the EF-Ts family.

Its subcellular location is the cytoplasm. Associates with the EF-Tu.GDP complex and induces the exchange of GDP to GTP. It remains bound to the aminoacyl-tRNA.EF-Tu.GTP complex up to the GTP hydrolysis stage on the ribosome. This Thioalkalivibrio sulfidiphilus (strain HL-EbGR7) protein is Elongation factor Ts.